We begin with the raw amino-acid sequence, 188 residues long: Elongation factor P-like protein (188 aa).

It belongs to the elongation factor P family.

This chain is Elongation factor P-like protein, found in Vibrio parahaemolyticus serotype O3:K6 (strain RIMD 2210633).